The primary structure comprises 405 residues: Imidazolonepropionase (405 aa).

His-73 and His-75 together coordinate Fe(3+). Residues His-73 and His-75 each contribute to the Zn(2+) site. 3 residues coordinate 4-imidazolone-5-propanoate: Arg-82, Tyr-145, and His-178. Tyr-145 contributes to the N-formimidoyl-L-glutamate binding site. His-243 lines the Fe(3+) pocket. His-243 contacts Zn(2+). Gln-246 contributes to the 4-imidazolone-5-propanoate binding site. Asp-318 is a binding site for Fe(3+). Asp-318 serves as a coordination point for Zn(2+). Asn-320 and Gly-322 together coordinate N-formimidoyl-L-glutamate. Residue Thr-323 coordinates 4-imidazolone-5-propanoate.

Belongs to the metallo-dependent hydrolases superfamily. HutI family. Zn(2+) serves as cofactor. The cofactor is Fe(3+).

The protein resides in the cytoplasm. The catalysed reaction is 4-imidazolone-5-propanoate + H2O = N-formimidoyl-L-glutamate. It participates in amino-acid degradation; L-histidine degradation into L-glutamate; N-formimidoyl-L-glutamate from L-histidine: step 3/3. Functionally, catalyzes the hydrolytic cleavage of the carbon-nitrogen bond in imidazolone-5-propanoate to yield N-formimidoyl-L-glutamate. It is the third step in the universal histidine degradation pathway. The protein is Imidazolonepropionase of Brucella abortus (strain S19).